A 326-amino-acid polypeptide reads, in one-letter code: MRLPVCLILLGPLIAQGTEEDCPHKKAVTLLPSFTMTPTATESTASPTTSHRPTTTSHGNVTVHTSSGPTTVTHNPATTTSHGNATISHATVSPTTNGTATSPRSSTVGPHPGPPPPSPSPRSKGALGNYTWANGSQPCVQLQAQIQIRILYPIQGGRKAWGISVLNPNKTKVQGGCDGTHPHLSLSFPYGQLTFGFKQDLHQSPSTVYLDYMAVEYNVSFPQAAQWTFMAQNSSLRELQAPLGQSFCCGNASIVLSPAVHLDLLSLRLQAAQLPDKGHFGPCFSCNRDQSLLLPLIIGLVLLGLLTLVLIAFCITRRRQSTYQPL.

An N-terminal signal peptide occupies residues 1–20 (MRLPVCLILLGPLIAQGTEE). Positions 21 to 109 (DCPHKKAVTL…ATSPRSSTVG (89 aa)) are mucin-like. Residues 21–291 (DCPHKKAVTL…PCFSCNRDQS (271 aa)) are Extracellular-facing. Positions 38–58 (PTATESTASPTTSHRPTTTSH) are enriched in low complexity. Residues 38–129 (PTATESTASP…SPRSKGALGN (92 aa)) are disordered. 4 tandem repeats follow at residues 44–49 (TASPTT), 50–64 (SHRP…VTVH), 65–72 (TSSGPTTV), and 73–88 (THNP…ATIS). Over residues 59 to 69 (GNVTVHTSSGP) the composition is skewed to polar residues. A glycan (N-linked (GlcNAc...) asparagine) is linked at Asn-60. The segment covering 70 to 80 (TTVTHNPATTT) has biased composition (low complexity). Residues 81–108 (SHGNATISHATVSPTTNGTATSPRSSTV) are compositionally biased toward polar residues. N-linked (GlcNAc...) asparagine glycosylation is found at Asn-84 and Asn-97. The segment covering 111–120 (HPGPPPPSPS) has biased composition (pro residues). 6 N-linked (GlcNAc...) asparagine glycosylation sites follow: Asn-129, Asn-134, Asn-169, Asn-218, Asn-233, and Asn-251. Cys-139 and Cys-177 are joined by a disulfide. A disulfide bridge connects residues Cys-249 and Cys-286. A helical transmembrane segment spans residues 292–316 (LLLPLIIGLVLLGLLTLVLIAFCIT). Topologically, residues 317–326 (RRRQSTYQPL) are cytoplasmic.

This sequence belongs to the LAMP family. N- and O-glycosylated. In terms of tissue distribution, expressed in tissue macrophages and to a lesser extent in dendritic cells.

The protein resides in the endosome membrane. It localises to the lysosome membrane. The protein localises to the cell membrane. In terms of biological role, could play a role in phagocytic activities of tissue macrophages, both in intracellular lysosomal metabolism and extracellular cell-cell and cell-pathogen interactions. Binds to tissue- and organ-specific lectins or selectins, allowing homing of macrophage subsets to particular sites. Rapid recirculation of CD68 from endosomes and lysosomes to the plasma membrane may allow macrophages to crawl over selectin-bearing substrates or other cells. This Mus musculus (Mouse) protein is Macrosialin (Cd68).